Reading from the N-terminus, the 79-residue chain is Small ribosomal subunit protein bS16 (79 aa).

The protein belongs to the bacterial ribosomal protein bS16 family.

The sequence is that of Small ribosomal subunit protein bS16 from Oleidesulfovibrio alaskensis (strain ATCC BAA-1058 / DSM 17464 / G20) (Desulfovibrio alaskensis).